A 1383-amino-acid polypeptide reads, in one-letter code: DNA-directed RNA polymerase subunit beta (1383 aa).

This sequence belongs to the RNA polymerase beta chain family. The RNAP catalytic core consists of 2 alpha, 1 beta, 1 beta' and 1 omega subunit. When a sigma factor is associated with the core the holoenzyme is formed, which can initiate transcription.

It catalyses the reaction RNA(n) + a ribonucleoside 5'-triphosphate = RNA(n+1) + diphosphate. Functionally, DNA-dependent RNA polymerase catalyzes the transcription of DNA into RNA using the four ribonucleoside triphosphates as substrates. This chain is DNA-directed RNA polymerase subunit beta, found in Xanthomonas euvesicatoria pv. vesicatoria (strain 85-10) (Xanthomonas campestris pv. vesicatoria).